Consider the following 366-residue polypeptide: Actin-like protein 8 (366 aa).

This sequence belongs to the actin family. Strongly expressed in testis and pancreas. Weak expression in placenta.

It localises to the cytoplasm. The protein localises to the cytoskeleton. The sequence is that of Actin-like protein 8 (ACTL8) from Homo sapiens (Human).